We begin with the raw amino-acid sequence, 369 residues long: MPDPILLTPGPLTTSATTRHAMQHDWGSWDAAFNQLTASVCADLVAIAHGGDEYVCVPMQGSGTFSVEAALGTLVPRDGVVLVPDNGAYCARILKILGRLGIEAIALPFGEDAAVDPAAIEAAFAREPRITHVAQVHLETSAGVLNPLDDIAAVCRRHGKRLIVDAMSSFGALPITLAGSGIDALISASGKCLEGVPGMGFAIVRREALDASEGNSPSLALDLHDQYAYLLKTGQWRFTPPTHVIAALRAALDQYLAEGGQPARGARYVDNCRTLVESMHALGFTTFLDASVQAPVIVTFHAPDHPAYDFRRFYDAVRDAGFILYPGKLTQLETFRVGCIGAIDSNDIRRAVAAIAQAVESLGIAVQRA.

An N6-(pyridoxal phosphate)lysine modification is found at lysine 191.

Belongs to the class-V pyridoxal-phosphate-dependent aminotransferase family. PhnW subfamily. As to quaternary structure, homodimer. Pyridoxal 5'-phosphate is required as a cofactor.

The enzyme catalyses (2-aminoethyl)phosphonate + pyruvate = phosphonoacetaldehyde + L-alanine. Involved in phosphonate degradation. The sequence is that of 2-aminoethylphosphonate--pyruvate transaminase 1 from Burkholderia lata (strain ATCC 17760 / DSM 23089 / LMG 22485 / NCIMB 9086 / R18194 / 383).